Reading from the N-terminus, the 494-residue chain is Glutamate--tRNA ligase (494 aa).

A 'HIGH' region motif is present at residues 10–20; that stretch reads PSPTGDPHVGT. Positions 107, 109, 134, and 136 each coordinate Zn(2+). The 'KMSKS' region motif lies at 251-255; the sequence is KLSKR. Lysine 254 serves as a coordination point for ATP.

The protein belongs to the class-I aminoacyl-tRNA synthetase family. Glutamate--tRNA ligase type 1 subfamily. In terms of assembly, monomer. Zn(2+) serves as cofactor.

It localises to the cytoplasm. It carries out the reaction tRNA(Glu) + L-glutamate + ATP = L-glutamyl-tRNA(Glu) + AMP + diphosphate. Catalyzes the attachment of glutamate to tRNA(Glu) in a two-step reaction: glutamate is first activated by ATP to form Glu-AMP and then transferred to the acceptor end of tRNA(Glu). The chain is Glutamate--tRNA ligase from Pseudomonas aeruginosa (strain UCBPP-PA14).